The chain runs to 102 residues: MALTKAELTDLLFENIGLNKREAKEIVECFYEEMRAALQNGDGVKLSGFGNFQLRTKPQRPGRNPKTGEEIPISARRVVTFHASQKLKSMVEANYRGESGTN.

Positions 49-70 (FGNFQLRTKPQRPGRNPKTGEE) are disordered.

It belongs to the bacterial histone-like protein family. As to quaternary structure, heterodimer of an alpha and a beta chain.

This protein is one of the two subunits of integration host factor, a specific DNA-binding protein that functions in genetic recombination as well as in transcriptional and translational control. In Nitrosomonas europaea (strain ATCC 19718 / CIP 103999 / KCTC 2705 / NBRC 14298), this protein is Integration host factor subunit alpha.